Consider the following 125-residue polypeptide: uncharacterized protein (125 aa).

It belongs to the asfivirus B125R family.

This is an uncharacterized protein from African swine fever virus (isolate Pig/Kenya/KEN-50/1950) (ASFV).